The chain runs to 240 residues: UDP-2,3-diacylglucosamine hydrolase (240 aa).

The Mn(2+) site is built by Asp8, His10, Asp41, Asn79, and His114. 79–80 (NR) contributes to the substrate binding site. Substrate is bound by residues Asp122, Ser160, Asn164, Lys167, and His195. Mn(2+)-binding residues include His195 and His197.

This sequence belongs to the LpxH family. It depends on Mn(2+) as a cofactor.

The protein localises to the cell inner membrane. The enzyme catalyses UDP-2-N,3-O-bis[(3R)-3-hydroxytetradecanoyl]-alpha-D-glucosamine + H2O = 2-N,3-O-bis[(3R)-3-hydroxytetradecanoyl]-alpha-D-glucosaminyl 1-phosphate + UMP + 2 H(+). It functions in the pathway glycolipid biosynthesis; lipid IV(A) biosynthesis; lipid IV(A) from (3R)-3-hydroxytetradecanoyl-[acyl-carrier-protein] and UDP-N-acetyl-alpha-D-glucosamine: step 4/6. In terms of biological role, hydrolyzes the pyrophosphate bond of UDP-2,3-diacylglucosamine to yield 2,3-diacylglucosamine 1-phosphate (lipid X) and UMP by catalyzing the attack of water at the alpha-P atom. Involved in the biosynthesis of lipid A, a phosphorylated glycolipid that anchors the lipopolysaccharide to the outer membrane of the cell. The sequence is that of UDP-2,3-diacylglucosamine hydrolase from Proteus mirabilis (strain HI4320).